Consider the following 174-residue polypeptide: Adipose-secreted signaling protein (174 aa).

It belongs to the ADISSP family.

The protein resides in the secreted. Functionally, may be involved in thermogenesis and glucose homeostasis. This Xenopus tropicalis (Western clawed frog) protein is Adipose-secreted signaling protein.